We begin with the raw amino-acid sequence, 426 residues long: Serine--tRNA ligase (426 aa).

An L-serine-binding site is contributed by 233–235 (TAE). Residue 264 to 266 (RSE) participates in ATP binding. Glutamate 287 serves as a coordination point for L-serine. 351–354 (EISS) contributes to the ATP binding site. Serine 387 is an L-serine binding site.

Belongs to the class-II aminoacyl-tRNA synthetase family. Type-1 seryl-tRNA synthetase subfamily. As to quaternary structure, homodimer. The tRNA molecule binds across the dimer.

Its subcellular location is the cytoplasm. The catalysed reaction is tRNA(Ser) + L-serine + ATP = L-seryl-tRNA(Ser) + AMP + diphosphate + H(+). It carries out the reaction tRNA(Sec) + L-serine + ATP = L-seryl-tRNA(Sec) + AMP + diphosphate + H(+). It functions in the pathway aminoacyl-tRNA biosynthesis; selenocysteinyl-tRNA(Sec) biosynthesis; L-seryl-tRNA(Sec) from L-serine and tRNA(Sec): step 1/1. Functionally, catalyzes the attachment of serine to tRNA(Ser). Is also able to aminoacylate tRNA(Sec) with serine, to form the misacylated tRNA L-seryl-tRNA(Sec), which will be further converted into selenocysteinyl-tRNA(Sec). This chain is Serine--tRNA ligase, found in Pseudomonas putida (strain GB-1).